The primary structure comprises 381 residues: uncharacterized protein (381 aa).

A disordered region spans residues 176-292; it reads HAAGKIKKSK…EPMVDETPQN (117 aa). The segment covering 177–186 has biased composition (basic residues); that stretch reads AAGKIKKSKN. Residues 187–212 show a composition bias toward basic and acidic residues; the sequence is QKKDGTLSRPLGKKENKSVVKVKIEE. A compositionally biased stretch (acidic residues) spans 276–286; sequence DEEDEDEEPMV.

This is an uncharacterized protein from Caenorhabditis elegans.